Reading from the N-terminus, the 470-residue chain is tRNA (guanine(37)-N(1))-methyltransferase (470 aa).

Residues 304–305 (DL), 332–333 (DG), and Asn370 contribute to the S-adenosyl-L-methionine site.

Belongs to the class I-like SAM-binding methyltransferase superfamily. TRM5/TYW2 family. Monomer.

It is found in the mitochondrion matrix. The protein localises to the nucleus. It localises to the cytoplasm. It carries out the reaction guanosine(37) in tRNA + S-adenosyl-L-methionine = N(1)-methylguanosine(37) in tRNA + S-adenosyl-L-homocysteine + H(+). Specifically methylates the N1 position of guanosine-37 in various cytoplasmic and mitochondrial tRNAs. Methylation is not dependent on the nature of the nucleoside 5' of the target nucleoside. This is the first step in the biosynthesis of wybutosine (yW), a modified base adjacent to the anticodon of tRNAs and required for accurate decoding. This Theileria parva (East coast fever infection agent) protein is tRNA (guanine(37)-N(1))-methyltransferase.